Here is a 139-residue protein sequence, read N- to C-terminus: Transcription antitermination protein NusB (139 aa).

The protein belongs to the NusB family.

Involved in transcription antitermination. Required for transcription of ribosomal RNA (rRNA) genes. Binds specifically to the boxA antiterminator sequence of the ribosomal RNA (rrn) operons. In Cronobacter sakazakii (strain ATCC BAA-894) (Enterobacter sakazakii), this protein is Transcription antitermination protein NusB.